We begin with the raw amino-acid sequence, 100 residues long: Urease subunit gamma (100 aa).

The protein belongs to the urease gamma subunit family. In terms of assembly, heterotrimer of UreA (gamma), UreB (beta) and UreC (alpha) subunits. Three heterotrimers associate to form the active enzyme.

It localises to the cytoplasm. The catalysed reaction is urea + 2 H2O + H(+) = hydrogencarbonate + 2 NH4(+). It functions in the pathway nitrogen metabolism; urea degradation; CO(2) and NH(3) from urea (urease route): step 1/1. This chain is Urease subunit gamma, found in Ectopseudomonas mendocina (strain ymp) (Pseudomonas mendocina).